We begin with the raw amino-acid sequence, 394 residues long: Acetate kinase (394 aa).

Residue asparagine 10 coordinates Mg(2+). Lysine 17 serves as a coordination point for ATP. Arginine 87 provides a ligand contact to substrate. The Proton donor/acceptor role is filled by aspartate 144. Residues 204 to 208 (HLGNG), 279 to 281 (DMR), and 327 to 331 (GIGEN) contribute to the ATP site. Residue glutamate 381 coordinates Mg(2+).

The protein belongs to the acetokinase family. Homodimer. Requires Mg(2+) as cofactor. The cofactor is Mn(2+).

The protein localises to the cytoplasm. It carries out the reaction acetate + ATP = acetyl phosphate + ADP. It functions in the pathway metabolic intermediate biosynthesis; acetyl-CoA biosynthesis; acetyl-CoA from acetate: step 1/2. Its function is as follows. Catalyzes the formation of acetyl phosphate from acetate and ATP. Can also catalyze the reverse reaction. The polypeptide is Acetate kinase (Ectopseudomonas mendocina (strain ymp) (Pseudomonas mendocina)).